The primary structure comprises 282 residues: Large ribosomal subunit protein uL2 (282 aa).

The tract at residues 215-282 (RHKGIRPTVR…IIRSRKETKK (68 aa)) is disordered. Positions 263–282 (RNPKKPSTKLIIRSRKETKK) are enriched in basic residues.

Belongs to the universal ribosomal protein uL2 family. In terms of assembly, part of the 50S ribosomal subunit. Forms a bridge to the 30S subunit in the 70S ribosome.

One of the primary rRNA binding proteins. Required for association of the 30S and 50S subunits to form the 70S ribosome, for tRNA binding and peptide bond formation. It has been suggested to have peptidyltransferase activity; this is somewhat controversial. Makes several contacts with the 16S rRNA in the 70S ribosome. The protein is Large ribosomal subunit protein uL2 of Mesomycoplasma hyopneumoniae (strain J / ATCC 25934 / NCTC 10110) (Mycoplasma hyopneumoniae).